The primary structure comprises 205 residues: MTISNATQLICFFALSATLILGALGVVLLPNIVYSAFLLGSVFLSVAGLYLLLNASFVAAAQVLIYVGAVNVLILFAIMLVNREEELKVIPGLAIRRFFSGVVCMGLLVILERIATTTHWAQVGPIPLGEEATIRIGEHLFSDYLLPFELASILLLIAMIGAIVLARKDLVDLKPIIEQRIDPKEIKLPSSSMFRKKSKKLTDMG.

A run of 5 helical transmembrane segments spans residues 9–29, 32–52, 61–81, 90–110, and 145–165; these read LICF…VVLL, IVYS…LYLL, AQVL…IMLV, IPGL…LLVI, and LLPF…AIVL.

This sequence belongs to the complex I subunit 6 family. NDH is composed of at least 16 different subunits, 5 of which are encoded in the nucleus.

The protein resides in the plastid. The protein localises to the organellar chromatophore thylakoid membrane. It carries out the reaction a plastoquinone + NADH + (n+1) H(+)(in) = a plastoquinol + NAD(+) + n H(+)(out). The enzyme catalyses a plastoquinone + NADPH + (n+1) H(+)(in) = a plastoquinol + NADP(+) + n H(+)(out). Its function is as follows. NDH shuttles electrons from NAD(P)H:plastoquinone, via FMN and iron-sulfur (Fe-S) centers, to quinones in the photosynthetic chain and possibly in a chloroplast respiratory chain. The immediate electron acceptor for the enzyme in this species is believed to be plastoquinone. Couples the redox reaction to proton translocation, and thus conserves the redox energy in a proton gradient. This is NAD(P)H-quinone oxidoreductase subunit 6, organellar chromatophore (ndhG) from Paulinella chromatophora.